Here is a 1890-residue protein sequence, read N- to C-terminus: Callose synthase 9 (1890 aa).

At 1 to 489 the chain is on the cytoplasmic side; it reads MSRAESSWER…EHRTFLHLYH (489 aa). The chain crosses the membrane as a helical span at residues 490–510; it reads SFHRLWIFLAMMFQALAIIAF. Over 511 to 523 the chain is Extracellular; the sequence is NKDDLTSRKTLLQ. Residues 524–544 traverse the membrane as a helical segment; the sequence is ILSLGPTFVVMKFSESVLEVI. The Cytoplasmic portion of the chain corresponds to 545-560; that stretch reads MMYGAYSTTRRLAVSR. The helical transmembrane segment at 561–581 threads the bilayer; the sequence is IFLRFIWFGLASVFISFLYVK. The Extracellular segment spans residues 582–591; the sequence is SLKAPNSDSP. Residues 592–612 traverse the membrane as a helical segment; that stretch reads IVQLYLIVIAIYGGVQFFFSI. Topologically, residues 613–658 are cytoplasmic; it reads LMRIPTCHNIANKCDRWPVIRFFKWMRQERHYVGRGMYERTSDFIK. The helical transmembrane segment at 659-679 threads the bilayer; it reads YLLFWLVVLSAKFSFAYFLQI. Topologically, residues 680 to 722 are extracellular; that stretch reads KPLVGPTRMIVKQNNIPYSWHDFVSRKNYNALTVASLWAPVVA. The helical transmembrane segment at 723 to 743 threads the bilayer; it reads IYLLDIHIFYTIFSAFLGFLL. Residues 744-1457 lie on the Cytoplasmic side of the membrane; it reads GARDRLGEIR…QLLDFFRMMS (714 aa). A helical membrane pass occupies residues 1458–1478; sequence FFFTTVGFYLCTMLTVLTVYI. The Extracellular segment spans residues 1479 to 1512; that stretch reads FLYGRAYLALSGVGATIRERAILLDDTALSAALN. A helical transmembrane segment spans residues 1513–1533; that stretch reads AQFLFQIGVFTAVPMVLGFIL. Topologically, residues 1534 to 1539 are cytoplasmic; the sequence is EQGFLQ. Residues 1540 to 1560 form a helical membrane-spanning segment; that stretch reads AIVSFITMQFQLCTVFFTFSL. Over 1561 to 1609 the chain is Extracellular; that stretch reads GTRTHYFGRTILHGGARYQATGRGFVVKHIKFSENYRLYSRSHFVKAME. A run of 2 helical transmembrane segments spans residues 1610-1630 and 1631-1651; these read VILL…AVSY and ILLT…PYLF. The Extracellular portion of the chain corresponds to 1652–1703; that stretch reads NPAGFEWQKVVEDFKEWTNWLFYRGGIGVKGAESWEAWWEEELSHIRTLSGR. The helical transmembrane segment at 1704–1724 threads the bilayer; sequence IMETILSLRFFIFQYGIVYKL. Over 1725–1732 the chain is Cytoplasmic; sequence KLQGSDTS. A helical transmembrane segment spans residues 1733 to 1753; it reads FAVYGWSWVAFAMIIVLFKVF. Topologically, residues 1754–1768 are extracellular; the sequence is TFSQKISVNFQLLLR. The helical transmembrane segment at 1769–1789 threads the bilayer; the sequence is FIQGLSLLMALAGIIVAVVLT. The Cytoplasmic portion of the chain corresponds to 1790–1795; sequence PLSVTD. The chain crosses the membrane as a helical span at residues 1796–1816; sequence IFACVLAFIPTGWGILSIACA. Residues 1817 to 1838 are Extracellular-facing; sequence WKPVLKRMGMWKSIRSLARLYD. Residues 1839 to 1859 traverse the membrane as a helical segment; that stretch reads ALMGMLIFLPVALCSWFPFVS. Topologically, residues 1860-1890 are cytoplasmic; it reads TFQTRMMFNQAFSRGLEISLILAGDNPNSGL.

Belongs to the glycosyltransferase 48 family.

Its subcellular location is the cell membrane. It carries out the reaction [(1-&gt;3)-beta-D-glucosyl](n) + UDP-alpha-D-glucose = [(1-&gt;3)-beta-D-glucosyl](n+1) + UDP + H(+). Its function is as follows. Involved in sporophytic and gametophytic development. Required for normal plant development. During pollen formation, required for the entry of microspores into mitosis and microspore symmetric division. May be required for correct temporal and spatial control of callose deposition during pollen mitosis. During plant growth and development, callose is found as a transitory component of the cell plate in dividing cells, is a major component of pollen mother cell walls and pollen tubes, and is found as a structural component of plasmodesmatal canals. The sequence is that of Callose synthase 9 (CALS9) from Arabidopsis thaliana (Mouse-ear cress).